Reading from the N-terminus, the 287-residue chain is uncharacterized protein (287 aa).

GTP is bound by residues 43–50 (GKTGVGKS), 90–93 (DLPG), and 156–159 (DKAE). In terms of domain architecture, G spans 48-138 (GKSSLCNALF…LTVDEHFYHQ (91 aa)).

The protein to E.coli YfjP and YeeP.

This is an uncharacterized protein from Escherichia coli (strain K12).